A 209-amino-acid polypeptide reads, in one-letter code: Floral homeotic protein GLOBOSA (209 aa).

An MADS-box domain is found at 3-57 (RGKIEIKRIENSSNRQVTYSKRRNGILKKAKEISVLCDARVSVIIFASSGKMHEF). The K-box domain maps to 82–173 (HENLDNEINK…QLEIASMNRN (92 aa)).

Expressed mainly in floral organs and, within the flower, expression is restricted to petals and stamens.

It is found in the nucleus. Its function is as follows. Transcription factor involved in the genetic control of flower development. Acts in conjunction with DEFICIENS (defA). In Nicotiana tabacum (Common tobacco), this protein is Floral homeotic protein GLOBOSA (GLO).